Here is a 94-residue protein sequence, read N- to C-terminus: Large ribosomal subunit protein eL43A (94 aa).

The C4-type zinc-finger motif lies at 39-62 (CPFCGRNTVKRTAAGIWCCNGKGC).

This sequence belongs to the eukaryotic ribosomal protein eL43 family. Component of the large ribosomal subunit (LSU). Mature yeast ribosomes consist of a small (40S) and a large (60S) subunit. The 40S small subunit contains 1 molecule of ribosomal RNA (18S rRNA) and at least 33 different proteins. The large 60S subunit contains 3 rRNA molecules (25S, 5.8S and 5S rRNA) and at least 46 different proteins.

Its subcellular location is the cytoplasm. Component of the ribosome, a large ribonucleoprotein complex responsible for the synthesis of proteins in the cell. The small ribosomal subunit (SSU) binds messenger RNAs (mRNAs) and translates the encoded message by selecting cognate aminoacyl-transfer RNA (tRNA) molecules. The large subunit (LSU) contains the ribosomal catalytic site termed the peptidyl transferase center (PTC), which catalyzes the formation of peptide bonds, thereby polymerizing the amino acids delivered by tRNAs into a polypeptide chain. The nascent polypeptides leave the ribosome through a tunnel in the LSU and interact with protein factors that function in enzymatic processing, targeting, and the membrane insertion of nascent chains at the exit of the ribosomal tunnel. This Schizosaccharomyces pombe (strain 972 / ATCC 24843) (Fission yeast) protein is Large ribosomal subunit protein eL43A (rpl4301).